A 117-amino-acid chain; its full sequence is Large ribosomal subunit protein uL22 (117 aa).

The protein belongs to the universal ribosomal protein uL22 family. Part of the 50S ribosomal subunit.

Functionally, this protein binds specifically to 23S rRNA; its binding is stimulated by other ribosomal proteins, e.g. L4, L17, and L20. It is important during the early stages of 50S assembly. It makes multiple contacts with different domains of the 23S rRNA in the assembled 50S subunit and ribosome. In terms of biological role, the globular domain of the protein is located near the polypeptide exit tunnel on the outside of the subunit, while an extended beta-hairpin is found that lines the wall of the exit tunnel in the center of the 70S ribosome. The polypeptide is Large ribosomal subunit protein uL22 (Lacticaseibacillus casei (strain BL23) (Lactobacillus casei)).